The primary structure comprises 510 residues: Cytochrome P450 93A3 (510 aa).

The chain crosses the membrane as a helical span at residues 64–84; sequence PIIHLFLGSVPCVVASTAEAA. Cys-448 contributes to the heme binding site.

This sequence belongs to the cytochrome P450 family. Heme is required as a cofactor.

Its subcellular location is the membrane. The protein is Cytochrome P450 93A3 (CYP93A3) of Glycine max (Soybean).